The sequence spans 103 residues: Thioredoxin (103 aa).

One can recognise a Thioredoxin domain in the interval 1-103 (MVKEITDATF…ELDEVINKYV (103 aa)). An intrachain disulfide couples Cys28 to Cys31.

The protein belongs to the thioredoxin family.

Component of the thioredoxin-thioredoxin reductase system. Participates in various redox reactions through the reversible oxidation of its active center dithiol to a disulfide and catalyzes dithiol-disulfide exchange reactions. The protein is Thioredoxin (trxA) of Listeria innocua serovar 6a (strain ATCC BAA-680 / CLIP 11262).